A 446-amino-acid chain; its full sequence is uncharacterized protein (446 aa).

Disordered regions lie at residues 198–233, 309–337, and 394–431; these read SIQKQIPKQTQEQTQKQTQEQTQESSQNPHNEENYS, NEDNKNNMDNEEDSDESDIESDSDLDDSK, and SESVKSDSNESKSIKPESIKSESIKSDNSNNHKNFGNT. Residues 199–224 are compositionally biased toward low complexity; the sequence is IQKQIPKQTQEQTQKQTQEQTQESSQ. Acidic residues predominate over residues 317-333; that stretch reads DNEEDSDESDIESDSDL. A compositionally biased stretch (basic and acidic residues) spans 397-418; that stretch reads VKSDSNESKSIKPESIKSESIK.

This is an uncharacterized protein from Acanthamoeba polyphaga mimivirus (APMV).